A 572-amino-acid polypeptide reads, in one-letter code: Probable transporter MCH1 (572 aa).

Polar residues predominate over residues Met1–Asp29. Residues Met1 to Ile39 are disordered. N-linked (GlcNAc...) asparagine glycosylation is present at Asn30. 10 helical membrane passes run Leu50 to Ser70, Ala89 to Cys109, Pro116 to Tyr136, Phe159 to Val179, Gly193 to Ala213, Val232 to Phe252, Leu335 to Ile355, Phe426 to Val446, Leu459 to Trp479, and Tyr488 to Ala508. Residue Asn515 is glycosylated (N-linked (GlcNAc...) asparagine). A helical transmembrane segment spans residues Pro539–Trp559.

This sequence belongs to the major facilitator superfamily.

It is found in the vacuole membrane. Probable transporter. This is Probable transporter MCH1 (MCH1) from Gibberella zeae (strain ATCC MYA-4620 / CBS 123657 / FGSC 9075 / NRRL 31084 / PH-1) (Wheat head blight fungus).